Reading from the N-terminus, the 615-residue chain is Dihydroxy-acid dehydratase (615 aa).

Position 81 (D81) interacts with Mg(2+). C122 is a [2Fe-2S] cluster binding site. D123 and K124 together coordinate Mg(2+). K124 carries the N6-carboxylysine modification. Position 195 (C195) interacts with [2Fe-2S] cluster. Position 491 (E491) interacts with Mg(2+). S517 (proton acceptor) is an active-site residue.

The protein belongs to the IlvD/Edd family. Homodimer. [2Fe-2S] cluster serves as cofactor. Mg(2+) is required as a cofactor.

The catalysed reaction is (2R)-2,3-dihydroxy-3-methylbutanoate = 3-methyl-2-oxobutanoate + H2O. It catalyses the reaction (2R,3R)-2,3-dihydroxy-3-methylpentanoate = (S)-3-methyl-2-oxopentanoate + H2O. It functions in the pathway amino-acid biosynthesis; L-isoleucine biosynthesis; L-isoleucine from 2-oxobutanoate: step 3/4. Its pathway is amino-acid biosynthesis; L-valine biosynthesis; L-valine from pyruvate: step 3/4. In terms of biological role, functions in the biosynthesis of branched-chain amino acids. Catalyzes the dehydration of (2R,3R)-2,3-dihydroxy-3-methylpentanoate (2,3-dihydroxy-3-methylvalerate) into 2-oxo-3-methylpentanoate (2-oxo-3-methylvalerate) and of (2R)-2,3-dihydroxy-3-methylbutanoate (2,3-dihydroxyisovalerate) into 2-oxo-3-methylbutanoate (2-oxoisovalerate), the penultimate precursor to L-isoleucine and L-valine, respectively. The sequence is that of Dihydroxy-acid dehydratase from Shewanella pealeana (strain ATCC 700345 / ANG-SQ1).